The primary structure comprises 837 residues: V-type proton ATPase 116 kDa subunit a 1 (837 aa).

At 1–388 (MGELFRSEEM…DAYGIGTYRE (388 aa)) the chain is on the cytoplasmic side. Residues Thr250 and Thr360 each carry the phosphothreonine modification. Tyr364 is modified (phosphotyrosine). A helical membrane pass occupies residues 389 to 407 (INPAPYTIITFPFLFAVMF). Over 408 to 409 (GD) the chain is Vacuolar. The helical transmembrane segment at 410-426 (FGHGILMTLFAVWMVLR) threads the bilayer. The Cytoplasmic segment spans residues 427-441 (ESRILSQKNENEMFS). Residues 442–471 (TVFSGRYIILLMGVFSMYTGLIYNDCFSKS) traverse the membrane as a helical segment. The Vacuolar portion of the chain corresponds to 472–534 (LNIFGSSWSV…ATNKLTFLNS (63 aa)). Residues 535–554 (FKMKMSVILGIIHMLFGVSL) form a helical membrane-spanning segment. Residues 555–572 (SLFNHIYFKKPLNIYFGF) are Cytoplasmic-facing. Residues 573-593 (IPEIIFMTSLFGYLVILIFYK) traverse the membrane as a helical segment. At 594–638 (WTAYDAHTSENAPSLLIHFINMFLFSYPESGYSMLYSGQKGIQCF) the chain is on the vacuolar side. The helical transmembrane segment at 639–658 (LVVVALLCVPWMLLFKPLVL) threads the bilayer. Topologically, residues 659–724 (RRQYLRRKHL…ATMVHQAIHT (66 aa)) are cytoplasmic. The helical transmembrane segment at 725 to 749 (IEYCLGCISNTASYLRLWALSLAHA) threads the bilayer. Over 750–770 (QLSEVLWTMVIHIGLSVKSLA) the chain is Vacuolar. A helical membrane pass occupies residues 771-809 (GGLVLFFFFTAFATLTVAILLIMEGLSAFLHALRLHWVE). Topologically, residues 810–837 (FQNKFYSGTGFKFLPFSFEHIREGKFGE) are cytoplasmic.

Belongs to the V-ATPase 116 kDa subunit family. V-ATPase is a heteromultimeric enzyme made up of two complexes: the ATP-hydrolytic V1 complex and the proton translocation V0 complex. The V1 complex consists of three catalytic AB heterodimers that form a heterohexamer, three peripheral stalks each consisting of EG heterodimers, one central rotor including subunits D and F, and the regulatory subunits C and H. The proton translocation complex V0 consists of the proton transport subunit a, a ring of proteolipid subunits c9c'', rotary subunit d, subunits e and f, and the accessory subunits ATP6AP1/Ac45 and ATP6AP2/PRR. Interacts with SPAAR.

It is found in the cytoplasmic vesicle. It localises to the clathrin-coated vesicle membrane. The protein localises to the secretory vesicle. Its subcellular location is the synaptic vesicle membrane. The protein resides in the melanosome. Functionally, subunit of the V0 complex of vacuolar(H+)-ATPase (V-ATPase), a multisubunit enzyme composed of a peripheral complex (V1) that hydrolyzes ATP and a membrane integral complex (V0) that translocates protons. V-ATPase is responsible for the acidification of various organelles, such as lysosomes, endosomes, the trans-Golgi network, and secretory granules, including synaptic vesicles. In certain cell types, can be exported to the plasma membrane, where it is involved in the acidification of the extracellular environment. Required for assembly and activity of the vacuolar ATPase. Through its action on compartment acidification, plays an essential role in neuronal development in terms of integrity and connectivity of neurons. The protein is V-type proton ATPase 116 kDa subunit a 1 (ATP6V0A1) of Pongo abelii (Sumatran orangutan).